The following is a 421-amino-acid chain: GTPase Obg (421 aa).

An Obg domain is found at 4–161 (LHFIDEAFNE…FKIKIQLKVL (158 aa)). Residues 162–327 (ADVGLLGFPS…LKYAIKNLLQ (166 aa)) enclose the OBG-type G domain. GTP contacts are provided by residues 168-175 (GFPSVGKS), 193-197 (FTTLF), 214-217 (DLPG), 281-284 (NKMD), and 308-310 (SLI). Positions 175 and 195 each coordinate Mg(2+). Positions 343–421 (DLNSETQTFT…ICNYLFDFVI (79 aa)) constitute an OCT domain.

It belongs to the TRAFAC class OBG-HflX-like GTPase superfamily. OBG GTPase family. Monomer. Mg(2+) serves as cofactor.

It localises to the cytoplasm. Its function is as follows. An essential GTPase which binds GTP, GDP and possibly (p)ppGpp with moderate affinity, with high nucleotide exchange rates and a fairly low GTP hydrolysis rate. Plays a role in control of the cell cycle, stress response, ribosome biogenesis and in those bacteria that undergo differentiation, in morphogenesis control. The sequence is that of GTPase Obg from Phytoplasma australiense.